Consider the following 358-residue polypeptide: Fructose-bisphosphate aldolase 5, cytosolic (358 aa).

An N-acetylserine modification is found at Ser-2. Position 39 (Arg-39) interacts with substrate. Cys-68 carries the S-glutathionyl cysteine; transient modification. Cys-173 carries the post-translational modification S-glutathionyl cysteine; transient; alternate. An S-nitrosocysteine; transient; alternate modification is found at Cys-173. The Proton acceptor role is filled by Glu-183. The active-site Schiff-base intermediate with dihydroxyacetone-P is Lys-225. Substrate contacts are provided by residues 266 to 268 and Arg-298; that span reads SGG. Ser-350 is subject to Phosphoserine.

This sequence belongs to the class I fructose-bisphosphate aldolase family. Homotetramer. Interacts with TRX3. Post-translationally, S-glutathionylated at Cys-68 and Cys-173. S-nitrosylated at Cys-173. Expressed in rosette leaves and cauline leaves.

Its subcellular location is the cytoplasm. The protein localises to the cytosol. The catalysed reaction is beta-D-fructose 1,6-bisphosphate = D-glyceraldehyde 3-phosphate + dihydroxyacetone phosphate. It functions in the pathway carbohydrate degradation; glycolysis; D-glyceraldehyde 3-phosphate and glycerone phosphate from D-glucose: step 4/4. Functionally, fructose-bisphosphate aldolase that plays a key role in glycolysis and gluconeogenesis. In Arabidopsis thaliana (Mouse-ear cress), this protein is Fructose-bisphosphate aldolase 5, cytosolic.